The sequence spans 539 residues: CTP synthase (539 aa).

The tract at residues 1–268 is amidoligase domain; that stretch reads MADTKYIFVT…DETVLRKVGL (268 aa). Serine 15 is a binding site for CTP. A UTP-binding site is contributed by serine 15. 16-21 serves as a coordination point for ATP; the sequence is SLGKGI. Residue tyrosine 56 participates in L-glutamine binding. Aspartate 73 contacts ATP. Residues aspartate 73 and glutamate 143 each contribute to the Mg(2+) site. CTP-binding positions include 150 to 152, 189 to 194, and lysine 225; these read DIE and KTKPTQ. UTP is bound by residues 189–194 and lysine 225; that span reads KTKPTQ. The Glutamine amidotransferase type-1 domain occupies 294-536; it reads TIALVGKYVE…IREAIKTRKK (243 aa). Residue glycine 356 coordinates L-glutamine. The Nucleophile; for glutamine hydrolysis role is filled by cysteine 383. Residues 384–387, glutamate 407, and arginine 464 contribute to the L-glutamine site; that span reads LGMQ. Active-site residues include histidine 509 and glutamate 511.

Belongs to the CTP synthase family. Homotetramer.

It catalyses the reaction UTP + L-glutamine + ATP + H2O = CTP + L-glutamate + ADP + phosphate + 2 H(+). The enzyme catalyses L-glutamine + H2O = L-glutamate + NH4(+). It carries out the reaction UTP + NH4(+) + ATP = CTP + ADP + phosphate + 2 H(+). It functions in the pathway pyrimidine metabolism; CTP biosynthesis via de novo pathway; CTP from UDP: step 2/2. Its activity is regulated as follows. Allosterically activated by GTP, when glutamine is the substrate; GTP has no effect on the reaction when ammonia is the substrate. The allosteric effector GTP functions by stabilizing the protein conformation that binds the tetrahedral intermediate(s) formed during glutamine hydrolysis. Inhibited by the product CTP, via allosteric rather than competitive inhibition. Catalyzes the ATP-dependent amination of UTP to CTP with either L-glutamine or ammonia as the source of nitrogen. Regulates intracellular CTP levels through interactions with the four ribonucleotide triphosphates. The chain is CTP synthase from Porphyromonas gingivalis (strain ATCC 33277 / DSM 20709 / CIP 103683 / JCM 12257 / NCTC 11834 / 2561).